Consider the following 155-residue polypeptide: Ciliary microtubule inner protein 2C (155 aa).

The protein belongs to the CIMIP2 family.

Its subcellular location is the cytoplasm. The protein localises to the cytoskeleton. It is found in the cilium axoneme. Its function is as follows. Microtubule inner protein (MIP) part of the dynein-decorated doublet microtubules (DMTs) in cilia axoneme, which is required for motile cilia beating. The sequence is that of Ciliary microtubule inner protein 2C (cimip2ca) from Xenopus laevis (African clawed frog).